The chain runs to 189 residues: Elongation factor P (189 aa).

The protein belongs to the elongation factor P family.

The protein localises to the cytoplasm. The protein operates within protein biosynthesis; polypeptide chain elongation. In terms of biological role, involved in peptide bond synthesis. Stimulates efficient translation and peptide-bond synthesis on native or reconstituted 70S ribosomes in vitro. Probably functions indirectly by altering the affinity of the ribosome for aminoacyl-tRNA, thus increasing their reactivity as acceptors for peptidyl transferase. This Sinorhizobium fredii (strain NBRC 101917 / NGR234) protein is Elongation factor P.